The following is a 583-amino-acid chain: Aspartate--tRNA ligase (583 aa).

Glu-174 is a binding site for L-aspartate. The aspartate stretch occupies residues 198-201 (QTFK). L-aspartate is bound at residue Arg-220. ATP contacts are provided by residues 220 to 222 (RDE) and Gln-229. An L-aspartate-binding site is contributed by His-445. Position 479 (Glu-479) interacts with ATP. Position 486 (Arg-486) interacts with L-aspartate. 531–534 (GLDR) is a binding site for ATP.

It belongs to the class-II aminoacyl-tRNA synthetase family. Type 1 subfamily. In terms of assembly, homodimer.

The protein resides in the cytoplasm. It carries out the reaction tRNA(Asp) + L-aspartate + ATP = L-aspartyl-tRNA(Asp) + AMP + diphosphate. In terms of biological role, catalyzes the attachment of L-aspartate to tRNA(Asp) in a two-step reaction: L-aspartate is first activated by ATP to form Asp-AMP and then transferred to the acceptor end of tRNA(Asp). This is Aspartate--tRNA ligase from Flavobacterium psychrophilum (strain ATCC 49511 / DSM 21280 / CIP 103535 / JIP02/86).